The chain runs to 537 residues: Atrial natriuretic peptide receptor 3 (537 aa).

Residues 1-20 (MPSLLVLTFSACVLLGWALL) form the signal peptide. Positions 21-41 (ADCTGGGGSGGAGPGRGRRER) are excised as a propeptide. The Extracellular segment spans residues 42–477 (EALPPQKIEV…PCKASGGLEE (436 aa)). Asn-82 carries N-linked (GlcNAc...) asparagine glycosylation. 2 cysteine pairs are disulfide-bonded: Cys-104–Cys-132 and Cys-209–Cys-257. 2 N-linked (GlcNAc...) asparagine glycosylation sites follow: Asn-289 and Asn-390. Residues 478-500 (SAVTGIVVGALLGAGLLMAFYFF) form a helical membrane-spanning segment. The Cytoplasmic segment spans residues 501–537 (RKKYRITIERRNQQEESNVGKHRELREDSIRSHFSVA).

The protein belongs to the ANF receptor family. In terms of assembly, homodimer; disulfide-linked. Interacts with OSTN.

Its subcellular location is the cell membrane. Its function is as follows. Receptor for the natriuretic peptide hormones, binding with similar affinities atrial natriuretic peptide NPPA/ANP, brain natriuretic peptide NPPB/BNP, and C-type natriuretic peptide NPPC/CNP. May function as a clearance receptor for NPPA, NPPB and NPPC, regulating their local concentrations and effects. Acts as a regulator of osteoblast differentiation and bone growth by binding to its ligand osteocrin, thereby preventing binding between NPR3/NPR-C and natriuretic peptides, leading to increase cGMP production. The protein is Atrial natriuretic peptide receptor 3 (NPR3) of Bos taurus (Bovine).